The chain runs to 769 residues: MSSNCSCSLLSLFSLLLIIDLTVASSCPKTCGGIDIPYPFGIGTGCYLEKWYEIICVNNSVPFLSIINREVVSISFSDMYRRFFNVGYGSIRIRNPIASKGCSSGGQEFGSLLNMTGYPFYLGDNNMLIAVGCNNTASLTNVEPSIVGCESTCSTNQDIPINDYLGVLYCNARYGDSEYCKNISIMNDTSCNGIGCCKASLPARYQQIIGVEIDDSNTESKGCKVAFITDEEYFLSNGSDPERLHANGYDTVDLRWFIHTANHSFIGSLGCKSIDEYTILRRDNREYGIGCLCDYNSTTTGYATCSCASGFEGNPYIPGECKDINECVRGIDGNPVCTAGKCVNLLGGYTCEYTNHRPLVIGLSTSFSTLVFIGGIYWLYKFIRRQRRLNQKKKFFKRNGGLLLQQQLTTTEGNVDSTRVFNSRELEKATENFSLTRILGEGGQGTVYKGMLVDGRIVAVKKSKVVDEDKLEEFINEVVILSQINHRNIVKLLGCCLETDVPILVYEFIPNGNLFEHLHDDSDDYTMTTWEVRLRIAVDIAGALSYLHSAASSPIYHRDIKSTNIMLDEKHRAKVSDFGTSRTVTVDHTHLTTVVSGTVGYMDPEYFQSSQFTDKSDVYSFGVVLAELITGEKSVSFLRSQEYRTLATYFTLAMKENRLSDIIDARIRDGCKLNQVTAAAKIARKCLNMKGRKRPSMRQVSMELEKIRSYSEDMQPYEYASENEEEKKETLVDVNVESRNYVSVTAASSQYSIATTSSSRSDVEPLFPR.

A signal peptide spans 1–24 (MSSNCSCSLLSLFSLLLIIDLTVA). Residues 25 to 358 (SSCPKTCGGI…YTCEYTNHRP (334 aa)) are Extracellular-facing. Residues Asn58, Asn114, Asn134, Asn182, Asn187, Asn237, Asn262, and Asn296 are each glycosylated (N-linked (GlcNAc...) asparagine). Residues 291-351 (CLCDYNSTTT…CVNLLGGYTC (61 aa)) are atypical EGF-like. Intrachain disulfides connect Cys293/Cys305, Cys327/Cys342, and Cys337/Cys351. The chain crosses the membrane as a helical span at residues 359–379 (LVIGLSTSFSTLVFIGGIYWL). The Cytoplasmic portion of the chain corresponds to 380–769 (YKFIRRQRRL…RSDVEPLFPR (390 aa)). The region spanning 433–718 (FSLTRILGEG…SYSEDMQPYE (286 aa)) is the Protein kinase domain. Residues 439-447 (LGEGGQGTV) and Lys461 contribute to the ATP site. Tyr506 is subject to Phosphotyrosine. Catalysis depends on Asp559, which acts as the Proton acceptor. A phosphothreonine mark is found at Thr593 and Thr598. Position 606 is a phosphotyrosine (Tyr606).

It belongs to the protein kinase superfamily. Ser/Thr protein kinase family.

Its subcellular location is the membrane. It catalyses the reaction L-seryl-[protein] + ATP = O-phospho-L-seryl-[protein] + ADP + H(+). The enzyme catalyses L-threonyl-[protein] + ATP = O-phospho-L-threonyl-[protein] + ADP + H(+). Serine/threonine-protein kinase that may function as a signaling receptor of extracellular matrix component. In Arabidopsis thaliana (Mouse-ear cress), this protein is Wall-associated receptor kinase-like 10 (WAKL10).